We begin with the raw amino-acid sequence, 327 residues long: Ribose-phosphate pyrophosphokinase (327 aa).

Residues 40–42 (DGE) and 99–100 (RQ) each bind ATP. Residues His134 and Asp173 each coordinate Mg(2+). Lys196 is a catalytic residue. Residues Arg198, Asp222, and 226–230 (DTANT) each bind D-ribose 5-phosphate.

Belongs to the ribose-phosphate pyrophosphokinase family. Class I subfamily. As to quaternary structure, homohexamer. Mg(2+) is required as a cofactor.

Its subcellular location is the cytoplasm. It carries out the reaction D-ribose 5-phosphate + ATP = 5-phospho-alpha-D-ribose 1-diphosphate + AMP + H(+). The protein operates within metabolic intermediate biosynthesis; 5-phospho-alpha-D-ribose 1-diphosphate biosynthesis; 5-phospho-alpha-D-ribose 1-diphosphate from D-ribose 5-phosphate (route I): step 1/1. Functionally, involved in the biosynthesis of the central metabolite phospho-alpha-D-ribosyl-1-pyrophosphate (PRPP) via the transfer of pyrophosphoryl group from ATP to 1-hydroxyl of ribose-5-phosphate (Rib-5-P). This chain is Ribose-phosphate pyrophosphokinase, found in Neisseria meningitidis serogroup A / serotype 4A (strain DSM 15465 / Z2491).